The following is a 469-amino-acid chain: MRCIHELADVFINDSDERILTQSLDATEIDKHADYESFFSINSDESIMKARPWKSNAKYFKKTYISSLALCKMSVHAKSGGAIEVMGMMTGKIIKNSIIVMDVYPLPVEGTETRVNAQAEGYEYMVQYLENSKQVGRDENIVGWYHSHPGYGCWLSGIDVATQSLNQNFQDPYLAIVIDPMKTEDQGKVEIGAFRTFPDNYKSPDSAAPTNNTRGVPPSKQKDFGVHSDKYYSLDIQIFKSNLDTEILNIISNKSWIGKLIKSVNTANHQEQNMIENVFKLINKLQKKEVNQLNRFEISFIKKFDLIFEDIISKKLMNDNRFYSTISQSSYDSFSGHGNSSSNDEMDDESDLDDRDKSSAPLDISDTGNDDVMSMESSVNVYTDKRGDDNDDDDDNDGYDKRPMYTNYRSRANLTKPRKSGSSPEEHVKLSNNVNKTITNISNHSKDIGLTELQDLIALKTKESIFLGK.

In terms of domain architecture, MPN spans 63 to 200 (TYISSLALCK…IGAFRTFPDN (138 aa)). Zn(2+) is bound by residues His146, His148, and Asp159. Positions 146–159 (HSHPGYGCWLSGID) match the JAMM motif motif. 2 disordered regions span residues 201-220 (YKSP…PPSK) and 331-404 (YDSF…KRPM). The segment covering 344 to 353 (DEMDDESDLD) has biased composition (acidic residues).

It belongs to the peptidase M67A family. CSN5 subfamily. In terms of assembly, component of the COP9 signalosome (CSN) complex.

Its subcellular location is the cytoplasm. It is found in the nucleus. Its function is as follows. Catalytic Component of the COP9 signalosome (CSN) complex that acts as an regulator of the ubiquitin (Ubl) conjugation pathway by mediating the deneddylation of the cullin subunit of SCF-type E3 ubiquitin-protein ligase complexes. The CSN complex is involved in the regulation of the mating pheromone response. In Debaryomyces hansenii (strain ATCC 36239 / CBS 767 / BCRC 21394 / JCM 1990 / NBRC 0083 / IGC 2968) (Yeast), this protein is COP9 signalosome complex subunit 5 (RRI1).